Here is a 473-residue protein sequence, read N- to C-terminus: Double-stranded RNA-binding protein 7 (473 aa).

Over residues 1–10 the composition is skewed to pro residues; that stretch reads MDMPPTPLPP. A disordered region spans residues 1 to 22; that stretch reads MDMPPTPLPPETANTSPAPNGA. DRBM domains follow at residues 33 to 102 and 118 to 185; these read VFKS…EIVK and LCKN…AIQG. Composition is skewed to basic and acidic residues over residues 286-307, 317-327, and 416-427; these read KRVEAEPPRDIEMVQPDKENQH, DEARVEQEPSR, and VDARVVKEESPR. Disordered stretches follow at residues 286-329 and 393-473; these read KRVE…SRDI and QLNE…MSEE. Residues 433–450 are compositionally biased toward polar residues; the sequence is EATNMKETPKNSAVCNSP.

In terms of biological role, binds double-stranded RNA. This Oryza sativa subsp. japonica (Rice) protein is Double-stranded RNA-binding protein 7 (DRB7).